We begin with the raw amino-acid sequence, 387 residues long: 3-ketoacyl-CoA thiolase (387 aa).

The active-site Acyl-thioester intermediate is cysteine 91. Catalysis depends on proton acceptor residues histidine 343 and cysteine 373.

This sequence belongs to the thiolase-like superfamily. Thiolase family. Heterotetramer of two alpha chains (FadB) and two beta chains (FadA).

Its subcellular location is the cytoplasm. The enzyme catalyses an acyl-CoA + acetyl-CoA = a 3-oxoacyl-CoA + CoA. The protein operates within lipid metabolism; fatty acid beta-oxidation. In terms of biological role, catalyzes the final step of fatty acid oxidation in which acetyl-CoA is released and the CoA ester of a fatty acid two carbons shorter is formed. The chain is 3-ketoacyl-CoA thiolase from Escherichia coli O6:K15:H31 (strain 536 / UPEC).